Consider the following 543-residue polypeptide: Serine/threonine-protein kinase Chk2 (543 aa).

The disordered stretch occupies residues 1-66; sequence MSRESDVEAQ…SGTLSSLETV (66 aa). Residues 8–22 are compositionally biased toward polar residues; sequence EAQQSHGSSACSQPH. Positions 23–62 are enriched in low complexity; sequence GSVTQSQGSSSQSQGISSSSTSTMPNSSQSSHSSSGTLSS. At Ser-62 the chain carries Phosphoserine; by PLK3. Phosphothreonine; by ATM and MAP3K20 is present on Thr-68. The residue at position 73 (Ser-73) is a Phosphoserine; by PLK3. The FHA domain occupies 113-175; the sequence is YWFGRDKSCE…NGTFVNTELV (63 aa). The Protein kinase domain maps to 220-486; the sequence is YIMSKTLGSG…TEEALRHPWL (267 aa). ATP contacts are provided by residues 227 to 234, Lys-249, and 302 to 308; these read GSGACGEV and ELMEGGE. The active-site Proton acceptor is Asp-347. ATP-binding positions include 351-352 and Asp-368; that span reads EN. The T-loop/activation segment stretch occupies residues 368–394; sequence DFGHSKILGETSLMRTLCGTPTYLAPE. Position 379 is a phosphoserine; by autocatalysis (Ser-379). Phosphothreonine; by autocatalysis occurs at positions 383 and 387. Ser-456 bears the Phosphoserine mark. Positions 506-517 are enriched in polar residues; sequence TALPQVLAQPST. The tract at residues 506-538 is disordered; the sequence is TALPQVLAQPSTSRKRPREGEAEGAETTKRPAV. Basic and acidic residues predominate over residues 523–534; the sequence is REGEAEGAETTK.

The protein belongs to the protein kinase superfamily. CAMK Ser/Thr protein kinase family. CHK2 subfamily. In terms of assembly, homodimer. Homodimerization is part of the activation process but the dimer may dissociate following activation. Interacts with PML. Interacts with TP53. Interacts with RB1; phosphorylates RB1. Interacts with BRCA1. Interacts (phosphorylated at Thr-68) with MDC1; requires ATM-mediated phosphorylation of CHEK2. Interacts with TP53BP1; modulates CHEK2 phosphorylation at Thr-68 in response to ionizing radiation. Interacts with CDC25A; phosphorylates CDC25A and mediates its degradation in response to ionizing radiation. Interacts with CUL1; mediates CHEK2 ubiquitination and regulation. Interacts with CDKN2AIP. Interacts (via protein kinase domain) with CCAR2 (via N-terminus). Interacts with SIRT1. Mg(2+) is required as a cofactor. Post-translationally, phosphorylated. Phosphorylated at Ser-73 by PLK3 in response to DNA damage, promoting phosphorylation at Thr-68 by ATM and the G2/M transition checkpoint. Phosphorylation at Thr-68 induces homodimerization. Autophosphorylates at Thr-383 and Thr-387 in the T-loop/activation segment upon dimerization to become fully active and phosphorylate its substrates like for instance CDC25C. DNA damage-induced autophosphorylation at Ser-379 induces CUL1-mediated ubiquitination and regulates the pro-apoptotic function. Phosphorylation at Ser-456 also regulates ubiquitination. Phosphorylated by PLK4. Ubiquitinated. CUL1-mediated ubiquitination regulates the pro-apoptotic function. Ubiquitination may also regulate protein stability. Ubiquitinated by RNF8 via 'Lys-48'-linked ubiquitination. In terms of tissue distribution, high expression is found in testis, spleen, colon and peripheral blood leukocytes. Low expression is found in other tissues.

It is found in the nucleus. Its subcellular location is the PML body. The protein localises to the nucleoplasm. The catalysed reaction is L-seryl-[protein] + ATP = O-phospho-L-seryl-[protein] + ADP + H(+). It carries out the reaction L-threonyl-[protein] + ATP = O-phospho-L-threonyl-[protein] + ADP + H(+). Activated through phosphorylation at Thr-68 by ATM in response to DNA double-strand breaks. Activation is modulated by several mediators including MDC1 and TP53BP1. Induces homodimerization with exchange of the T-loop/activation segment between protomers and transphosphorylation of the protomers. The autophosphorylated kinase dimer is fully active. Negatively regulated by PPM1D through dephosphorylation of Thr-68. Its function is as follows. Serine/threonine-protein kinase which is required for checkpoint-mediated cell cycle arrest, activation of DNA repair and apoptosis in response to the presence of DNA double-strand breaks. May also negatively regulate cell cycle progression during unperturbed cell cycles. Following activation, phosphorylates numerous effectors preferentially at the consensus sequence [L-X-R-X-X-S/T]. Regulates cell cycle checkpoint arrest through phosphorylation of CDC25A, CDC25B and CDC25C, inhibiting their activity. Inhibition of CDC25 phosphatase activity leads to increased inhibitory tyrosine phosphorylation of CDK-cyclin complexes and blocks cell cycle progression. May also phosphorylate NEK6 which is involved in G2/M cell cycle arrest. Regulates DNA repair through phosphorylation of BRCA2, enhancing the association of RAD51 with chromatin which promotes DNA repair by homologous recombination. Also stimulates the transcription of genes involved in DNA repair (including BRCA2) through the phosphorylation and activation of the transcription factor FOXM1. Regulates apoptosis through the phosphorylation of p53/TP53, MDM4 and PML. Phosphorylation of p53/TP53 at 'Ser-20' by CHEK2 may alleviate inhibition by MDM2, leading to accumulation of active p53/TP53. Phosphorylation of MDM4 may also reduce degradation of p53/TP53. Also controls the transcription of pro-apoptotic genes through phosphorylation of the transcription factor E2F1. Tumor suppressor, it may also have a DNA damage-independent function in mitotic spindle assembly by phosphorylating BRCA1. Its absence may be a cause of the chromosomal instability observed in some cancer cells. Promotes the CCAR2-SIRT1 association and is required for CCAR2-mediated SIRT1 inhibition. Under oxidative stress, promotes ATG7 ubiquitination by phosphorylating the E3 ubiquitin ligase TRIM32 at 'Ser-55' leading to positive regulation of the autophagosme assembly. Functionally, (Microbial infection) Phosphorylates herpes simplex virus 1/HHV-1 protein ICP0 and thus activates its SUMO-targeted ubiquitin ligase activity. This chain is Serine/threonine-protein kinase Chk2, found in Homo sapiens (Human).